Consider the following 303-residue polypeptide: Glutathione transport system permease protein GsiD (303 aa).

The next 6 membrane-spanning stretches (helical) occupy residues Ala40 to Ile60, Leu105 to Leu125, Leu144 to Ile164, Ala165 to Gly185, Ile222 to Phe242, and Val266 to Phe286. The region spanning Ala101–Gly290 is the ABC transmembrane type-1 domain.

This sequence belongs to the binding-protein-dependent transport system permease family. As to quaternary structure, the complex is composed of two ATP-binding proteins (GsiA), two transmembrane proteins (GsiC and GsiD) and a solute-binding protein (GsiB).

It localises to the cell inner membrane. Its function is as follows. Part of the ABC transporter complex GsiABCD involved in glutathione import. Probably responsible for the translocation of the substrate across the membrane. The sequence is that of Glutathione transport system permease protein GsiD from Shigella flexneri serotype 5b (strain 8401).